A 297-amino-acid chain; its full sequence is Acetylglutamate kinase (297 aa).

Residues 70–71 (GG), R92, and N194 contribute to the substrate site.

Belongs to the acetylglutamate kinase family. ArgB subfamily.

The protein resides in the cytoplasm. It catalyses the reaction N-acetyl-L-glutamate + ATP = N-acetyl-L-glutamyl 5-phosphate + ADP. It functions in the pathway amino-acid biosynthesis; L-arginine biosynthesis; N(2)-acetyl-L-ornithine from L-glutamate: step 2/4. Catalyzes the ATP-dependent phosphorylation of N-acetyl-L-glutamate. The polypeptide is Acetylglutamate kinase (Herminiimonas arsenicoxydans).